Consider the following 388-residue polypeptide: Chorismate synthase (388 aa).

NADP(+)-binding residues include Arg39 and Arg45. Residues 130–132 (RSS), 251–252 (NA), Gly296, 311–315 (KPIPT), and Arg337 each bind FMN.

Belongs to the chorismate synthase family. Homotetramer. The cofactor is FMNH2.

It carries out the reaction 5-O-(1-carboxyvinyl)-3-phosphoshikimate = chorismate + phosphate. The protein operates within metabolic intermediate biosynthesis; chorismate biosynthesis; chorismate from D-erythrose 4-phosphate and phosphoenolpyruvate: step 7/7. Its function is as follows. Catalyzes the anti-1,4-elimination of the C-3 phosphate and the C-6 proR hydrogen from 5-enolpyruvylshikimate-3-phosphate (EPSP) to yield chorismate, which is the branch point compound that serves as the starting substrate for the three terminal pathways of aromatic amino acid biosynthesis. This reaction introduces a second double bond into the aromatic ring system. In Streptococcus uberis (strain ATCC BAA-854 / 0140J), this protein is Chorismate synthase.